The following is a 536-amino-acid chain: DEAD-box ATP-dependent RNA helicase 26 (536 aa).

The tract at residues 1 to 44 (MMSGGPSDATHRKRRRRRGPKGSGVDGPSIPRAVTTNGAGPEEE) is disordered. The span at 11–20 (HRKRRRRRGP) shows a compositional bias: basic residues. The Q motif motif lies at 74–102 (TRFDQCPVSPLSLKAIKDAGYEKMTQVQE). The 178-residue stretch at 105–282 (LPIILQGEDV…HIAMKRGYKF (178 aa)) folds into the Helicase ATP-binding domain. 118-125 (AKTGTGKT) is a binding site for ATP. Residues 230 to 233 (DEAD) carry the DEAD box motif. The 151-residue stretch at 316–466 (VLKKHIAEDA…SIQTGVKDAL (151 aa)) folds into the Helicase C-terminal domain.

This sequence belongs to the DEAD box helicase family.

The enzyme catalyses ATP + H2O = ADP + phosphate + H(+). The polypeptide is DEAD-box ATP-dependent RNA helicase 26 (Oryza sativa subsp. japonica (Rice)).